A 251-amino-acid polypeptide reads, in one-letter code: Large ribosomal subunit protein uL3 (251 aa).

N5-methylglutamine is present on Q151. Positions 219-251 are disordered; the sequence is PGAFRRNGEEAAAAPAAEAPAETPAEEAGQEGA. Positions 228-241 are enriched in low complexity; it reads EAAAAPAAEAPAET. Acidic residues predominate over residues 242 to 251; sequence PAEEAGQEGA.

It belongs to the universal ribosomal protein uL3 family. In terms of assembly, part of the 50S ribosomal subunit. Forms a cluster with proteins L14 and L19. In terms of processing, methylated by PrmB.

Functionally, one of the primary rRNA binding proteins, it binds directly near the 3'-end of the 23S rRNA, where it nucleates assembly of the 50S subunit. The protein is Large ribosomal subunit protein uL3 of Parvibaculum lavamentivorans (strain DS-1 / DSM 13023 / NCIMB 13966).